Consider the following 297-residue polypeptide: Ubiquinol oxidase 2, mitochondrial (297 aa).

Residues 17–43 (VALNDKQHDKKVENGGAAASGGGDGGD) form a disordered region. Residues 122 to 142 (AMMLETVAAVPGMVGGMLLHC) form a helical membrane-spanning segment. Residues Glu126, Glu165, and His168 each contribute to the Fe cation site. A helical membrane pass occupies residues 184–204 (ALVFAVQGVFINAYFVTYLLS). Positions 216, 267, and 270 each coordinate Fe cation.

The protein belongs to the alternative oxidase family. As to quaternary structure, homodimer; disulfide-linked. It depends on Fe cation as a cofactor.

It localises to the mitochondrion inner membrane. It carries out the reaction 2 a ubiquinol + O2 = 2 a ubiquinone + 2 H2O. In terms of biological role, catalyzes the cyanide-resistant oxidation of ubiquinol and the reduction of molecular oxygen to water, but does not translocate protons and consequently is not linked to oxidative phosphorylation. May increase respiration when the cytochrome respiratory pathway is restricted, or in response to low temperatures. The chain is Ubiquinol oxidase 2, mitochondrial (AOX2) from Nicotiana tabacum (Common tobacco).